The following is a 486-amino-acid chain: Ribulose bisphosphate carboxylase large chain (486 aa).

The substrate site is built by N125 and T175. K177 acts as the Proton acceptor in catalysis. K179 contacts substrate. Positions 203, 205, and 206 each coordinate Mg(2+). The residue at position 203 (K203) is an N6-carboxylysine. Catalysis depends on H295, which acts as the Proton acceptor. Substrate-binding residues include R296, H328, and S380.

It belongs to the RuBisCO large chain family. Type I subfamily. Heterohexadecamer of 8 large chains and 8 small chains. Requires Mg(2+) as cofactor.

It catalyses the reaction 2 (2R)-3-phosphoglycerate + 2 H(+) = D-ribulose 1,5-bisphosphate + CO2 + H2O. The enzyme catalyses D-ribulose 1,5-bisphosphate + O2 = 2-phosphoglycolate + (2R)-3-phosphoglycerate + 2 H(+). RuBisCO catalyzes two reactions: the carboxylation of D-ribulose 1,5-bisphosphate, the primary event in carbon dioxide fixation, as well as the oxidative fragmentation of the pentose substrate. Both reactions occur simultaneously and in competition at the same active site. This is Ribulose bisphosphate carboxylase large chain from Aurantimonas manganoxydans (strain ATCC BAA-1229 / DSM 21871 / SI85-9A1).